We begin with the raw amino-acid sequence, 326 residues long: Light-induced protein, chloroplastic (326 aa).

Residues 1 to 63 (MASISSLNQI…TNPKPKFTAQ (63 aa)) constitute a chloroplast transit peptide.

The protein belongs to the LIPC family. In terms of assembly, associates with the major light-harvesting antenna complex polypeptides of the PSII oxygen-evolving complex. Expressed in leaves.

Its subcellular location is the plastid. The protein resides in the chloroplast thylakoid membrane. Its function is as follows. Required for normal plant growth. May be both photoprotective and play an ancillary role in photosynthesis. May structurally stabilize thylakoids during osmotic and oxidative stress. The chain is Light-induced protein, chloroplastic from Solanum tuberosum (Potato).